A 258-amino-acid polypeptide reads, in one-letter code: Enterotoxin type D (258 aa).

Positions 1 to 25 (MKKFNILIALLFFTSLVISPLNVKA) are cleaved as a signal peptide. Residues D212, H248, H250, and D252 each coordinate Zn(2+).

The protein belongs to the staphylococcal/streptococcal toxin family. Homodimer; zinc-dependent. Interacts with MHC class II molecules composed of alpha/HLA-DRA and beta/HLA-DRB1 chains. Requires Zn(2+) as cofactor.

It localises to the secreted. Functionally, staphylococcal enterotoxin that activates the host immune system by binding as unprocessed molecules to major histocompatibility (MHC) complex class II and T-cell receptor (TCR) molecules. In turn, this ternary complex activates a large number of T-lymphocytes initiating a systemic release of pro-inflammatory cytokines. In addition, induces B-cell proliferation and differentiation in the presence of T-cells. Causes also the intoxication staphylococcal food poisoning syndrome. The polypeptide is Enterotoxin type D (entD) (Staphylococcus aureus).